The primary structure comprises 431 residues: Bone morphogenetic protein 7 (431 aa).

A signal peptide spans 1–29 (MHVRSLRAAAPHSFVALWAPLFLLRSALA). Positions 30-292 (DFSLDNEVHS…ATEVHFRSIR (263 aa)) are excised as a propeptide. N187, N302, N321, and N372 each carry an N-linked (GlcNAc...) asparagine glycan. Residues 291-311 (IRSTGSKQRSQNRSKTPKNQE) form a disordered region. 3 disulfides stabilise this stretch: C330–C396, C359–C428, and C363–C430.

The protein belongs to the TGF-beta family. In terms of assembly, homodimer; disulfide-linked. Interacts with SOSTDC1. Interacts with TWSG1. Interacts with FBN1 (via N-terminal domain) and FBN2. Interacts with type I receptor ACVR1. Interacts with type II receptor ACVR2A. Interacts with NOG; this interaction inhibits canonical BMP signaling. Interacts with SCUBE3. Interacts with ERFE; the interaction inhibits BMP-induced transcription of HAMP. Interacts with TGFBR3. Post-translationally, several N-termini starting at positions 293, 300, 315 and 316 have been identified by direct sequencing resulting in secretion of different mature forms. As to expression, expressed in the kidney and bladder. Lower levels seen in the brain.

The protein resides in the secreted. Functionally, growth factor of the TGF-beta superfamily that plays important role in various biological processes, including embryogenesis, hematopoiesis, neurogenesis and skeletal morphogenesis. Initiates the canonical BMP signaling cascade by associating with type I receptor ACVR1 and type II receptor ACVR2A. Once all three components are bound together in a complex at the cell surface, ACVR2A phosphorylates and activates ACVR1. In turn, ACVR1 propagates signal by phosphorylating SMAD1/5/8 that travel to the nucleus and act as activators and repressors of transcription of target genes. For specific functions such as growth cone collapse in developing spinal neurons and chemotaxis of monocytes, also uses BMPR2 as type II receptor. Can also signal through non-canonical pathways such as P38 MAP kinase signaling cascade that promotes brown adipocyte differentiation through activation of target genes, including members of the SOX family of transcription factors. Promotes the expression of HAMP, this is repressed by its interaction with ERFE. This Homo sapiens (Human) protein is Bone morphogenetic protein 7 (BMP7).